Here is a 969-residue protein sequence, read N- to C-terminus: Protein translocase subunit SecA (969 aa).

Residues Q99, 117-121 (GEGKT), and D631 contribute to the ATP site.

The protein belongs to the SecA family. In terms of assembly, monomer and homodimer. Part of the essential Sec protein translocation apparatus which comprises SecA, SecYEG and auxiliary proteins SecDF. Other proteins may also be involved.

It localises to the cell inner membrane. It is found in the cytoplasm. It carries out the reaction ATP + H2O + cellular proteinSide 1 = ADP + phosphate + cellular proteinSide 2.. In terms of biological role, part of the Sec protein translocase complex. Interacts with the SecYEG preprotein conducting channel. Has a central role in coupling the hydrolysis of ATP to the transfer of proteins into and across the cell membrane, serving as an ATP-driven molecular motor driving the stepwise translocation of polypeptide chains across the membrane. This is Protein translocase subunit SecA from Chlamydia felis (strain Fe/C-56) (Chlamydophila felis).